Here is a 384-residue protein sequence, read N- to C-terminus: S-adenosylmethionine synthase (384 aa).

H15 provides a ligand contact to ATP. Residue D17 participates in Mg(2+) binding. Residue E43 coordinates K(+). L-methionine is bound by residues E56 and Q99. The interval 99–109 (QSPDINQGVDR) is flexible loop. ATP is bound by residues 164 to 166 (DAK), 230 to 231 (RF), D239, 245 to 246 (RK), A262, and K266. D239 serves as a coordination point for L-methionine. L-methionine is bound at residue K270.

It belongs to the AdoMet synthase family. Homotetramer; dimer of dimers. Mg(2+) is required as a cofactor. K(+) serves as cofactor.

Its subcellular location is the cytoplasm. The catalysed reaction is L-methionine + ATP + H2O = S-adenosyl-L-methionine + phosphate + diphosphate. It functions in the pathway amino-acid biosynthesis; S-adenosyl-L-methionine biosynthesis; S-adenosyl-L-methionine from L-methionine: step 1/1. In terms of biological role, catalyzes the formation of S-adenosylmethionine (AdoMet) from methionine and ATP. The overall synthetic reaction is composed of two sequential steps, AdoMet formation and the subsequent tripolyphosphate hydrolysis which occurs prior to release of AdoMet from the enzyme. This is S-adenosylmethionine synthase from Salmonella agona (strain SL483).